The primary structure comprises 341 residues: Anthranilate phosphoribosyltransferase (341 aa).

Residues G79, 82-83, T87, 89-92, 107-115, and S119 contribute to the 5-phospho-alpha-D-ribose 1-diphosphate site; these read GD, NIST, and KHGNRAVSS. Anthranilate is bound at residue G79. Residue S91 participates in Mg(2+) binding. N110 serves as a coordination point for anthranilate. R165 serves as a coordination point for anthranilate. The Mg(2+) site is built by D224 and E225.

The protein belongs to the anthranilate phosphoribosyltransferase family. In terms of assembly, homodimer. It depends on Mg(2+) as a cofactor.

It carries out the reaction N-(5-phospho-beta-D-ribosyl)anthranilate + diphosphate = 5-phospho-alpha-D-ribose 1-diphosphate + anthranilate. Its pathway is amino-acid biosynthesis; L-tryptophan biosynthesis; L-tryptophan from chorismate: step 2/5. Catalyzes the transfer of the phosphoribosyl group of 5-phosphorylribose-1-pyrophosphate (PRPP) to anthranilate to yield N-(5'-phosphoribosyl)-anthranilate (PRA). This Bacillus cereus (strain G9842) protein is Anthranilate phosphoribosyltransferase.